A 681-amino-acid polypeptide reads, in one-letter code: Envelope glycoprotein (681 aa).

Residues Met-1 to Asn-18 form the signal peptide. Over Leu-19–Asp-648 the chain is Extracellular. 5 disulfides stabilise this stretch: Cys-37-Cys-610, Cys-92-Cys-119, Cys-211-Cys-226, Cys-512-Cys-557, and Cys-602-Cys-609. A receptor-binding region spans residues Ser-38 to His-188. 8 N-linked (GlcNAc...) asparagine; by host glycosylation sites follow: Asn-94, Asn-171, Asn-190, Asn-202, Asn-207, Asn-219, Asn-223, and Asn-255. Positions Asn-223–His-427 are disordered. Composition is skewed to polar residues over residues Leu-244–Pro-259, Thr-281–Leu-290, and Gly-308–Ala-318. Positions Glu-277–Pro-455 are mucin-like region. 11 N-linked (GlcNAc...) asparagine; by host glycosylation sites follow: Asn-310, Asn-313, Asn-325, Asn-326, Asn-337, Asn-344, Asn-345, Asn-350, Asn-360, Asn-408, and Asn-487. Over residues Asn-337 to Ser-347 the composition is skewed to low complexity. Polar residues predominate over residues Lys-348–Phe-414. Residues Gly-529 to Ile-549 form a fusion peptide region. Asn-564 carries N-linked (GlcNAc...) asparagine; by host glycosylation. N-linked (GlcNAc...) asparagine; by host glycosylation occurs at Asn-619. A helical membrane pass occupies residues Trp-649–Leu-669. Residues Ser-670–Gly-681 lie on the Cytoplasmic side of the membrane. 2 S-palmitoyl cysteine; by host lipidation sites follow: Cys-671 and Cys-673.

This sequence belongs to the filoviruses glycoprotein family. As to quaternary structure, homotrimer; each monomer consists of a GP1 and a GP2 subunit linked by disulfide bonds. The resulting peplomers (GP1,2) protrude from the virus surface as spikes. GP1,2 interacts with human CD209 and CLEC4M (collectively referred to as DC-SIGN(R)). Asialoglycoprotein receptor (ASGP-R) may be a liver-specific receptor for GP1,2. Members of the Tyro3 receptor tyrosine kinase family may be cell entry factors interacting with GP1,2. N-glycosylated. Post-translationally, O-glycosylated in the mucin-like region. In terms of processing, specific enzymatic cleavages in vivo yield mature proteins. The precursor is processed into GP1 and GP2 by host cell furin in the trans Golgi, and maybe by other host proteases, to yield the mature GP1 and GP2 proteins. The cleavage site corresponds to the furin optimal cleavage sequence [KR]-X-[KR]-R. GP1 is phosphorylated on serine residues between residues 260 and 273.

It localises to the virion membrane. Its subcellular location is the host cell membrane. GP1 is responsible for binding to the receptor(s) on target cells. Interacts with CD209/DC-SIGN and CLEC4M/DC-SIGNR which act as cofactors for virus entry into the host cell. Binding to CD209 and CLEC4M, which are respectively found on dendritic cells (DCs), and on endothelial cells of liver sinusoids and lymph node sinuses, facilitate infection of macrophages and endothelial cells. These interactions not only facilitate virus cell entry, but also allow capture of viral particles by DCs and subsequent transmission to susceptible cells without DCs infection (trans infection). Its function is as follows. GP2 acts as a class I viral fusion protein. Under the current model, the protein has at least 3 conformational states: pre-fusion native state, pre-hairpin intermediate state, and post-fusion hairpin state. During viral and target cell membrane fusion, the coiled coil regions (heptad repeats) assume a trimer-of-hairpins structure, positioning the fusion peptide in close proximity to the C-terminal region of the ectodomain. The formation of this structure appears to drive apposition and subsequent fusion of viral and target cell membranes. Responsible for penetration of the virus into the cell cytoplasm by mediating the fusion of the membrane of the endocytosed virus particle with the endosomal membrane. Low pH in endosomes induces an irreversible conformational change in GP2, releasing the fusion hydrophobic peptide. The protein is Envelope glycoprotein (GP) of Lake Victoria marburgvirus (strain Musoke-80) (MARV).